The primary structure comprises 388 residues: Nitric oxide reductase FlRd-NAD(+) reductase (388 aa).

The protein belongs to the FAD-dependent oxidoreductase family. Requires FAD as cofactor.

The protein resides in the cytoplasm. The catalysed reaction is 2 reduced [nitric oxide reductase rubredoxin domain] + NAD(+) + H(+) = 2 oxidized [nitric oxide reductase rubredoxin domain] + NADH. Its pathway is nitrogen metabolism; nitric oxide reduction. In terms of biological role, one of at least two accessory proteins for anaerobic nitric oxide (NO) reductase. Reduces the rubredoxin moiety of NO reductase. This is Nitric oxide reductase FlRd-NAD(+) reductase from Aeromonas salmonicida (strain A449).